Reading from the N-terminus, the 307-residue chain is Dof zinc finger protein DOF5.4 (307 aa).

The segment at 51–105 (LKCPRCNSLNTKFCYYNNYNLSQPRHFCKNCRRYWTKGGVLRNVPVGGGCRKAKR) adopts a Dof-type zinc-finger fold. Residues Cys-53, Cys-56, Cys-78, and Cys-81 each contribute to the Zn(2+) site. The interval 96–147 (VGGGCRKAKRSKTKQVPSSSSADKPTTTQDDHHVEEKSSTGSHSSSESSSLT) is disordered. Residues 109–123 (KQVPSSSSADKPTTT) show a composition bias toward polar residues. Positions 124–133 (QDDHHVEEKS) are enriched in basic and acidic residues. Low complexity predominate over residues 134 to 147 (STGSHSSSESSSLT).

The protein resides in the nucleus. Transcription factor that binds specifically to a 5'-AA[AG]G-3' consensus core sequence. Enhances the DNA binding of OBF transcription factors to OCS elements. In Arabidopsis thaliana (Mouse-ear cress), this protein is Dof zinc finger protein DOF5.4 (DOF5.4).